The chain runs to 173 residues: Adenine phosphoribosyltransferase (173 aa).

This sequence belongs to the purine/pyrimidine phosphoribosyltransferase family. In terms of assembly, homodimer.

The protein resides in the cytoplasm. It catalyses the reaction AMP + diphosphate = 5-phospho-alpha-D-ribose 1-diphosphate + adenine. It functions in the pathway purine metabolism; AMP biosynthesis via salvage pathway; AMP from adenine: step 1/1. In terms of biological role, catalyzes a salvage reaction resulting in the formation of AMP, that is energically less costly than de novo synthesis. The polypeptide is Adenine phosphoribosyltransferase (Solibacter usitatus (strain Ellin6076)).